The chain runs to 247 residues: Hydroxyacylglutathione hydrolase 1 (247 aa).

The Zn(2+) site is built by H54, H56, D58, H59, H111, D128, and H165.

It belongs to the metallo-beta-lactamase superfamily. Glyoxalase II family. In terms of assembly, monomer. Requires Zn(2+) as cofactor.

The enzyme catalyses an S-(2-hydroxyacyl)glutathione + H2O = a 2-hydroxy carboxylate + glutathione + H(+). Its pathway is secondary metabolite metabolism; methylglyoxal degradation; (R)-lactate from methylglyoxal: step 2/2. Functionally, thiolesterase that catalyzes the hydrolysis of S-D-lactoyl-glutathione to form glutathione and D-lactic acid. The sequence is that of Hydroxyacylglutathione hydrolase 1 from Vibrio vulnificus (strain YJ016).